A 274-amino-acid polypeptide reads, in one-letter code: Small ribosomal subunit protein uS2 (274 aa).

This sequence belongs to the universal ribosomal protein uS2 family.

The sequence is that of Small ribosomal subunit protein uS2 from Syntrophobacter fumaroxidans (strain DSM 10017 / MPOB).